The primary structure comprises 485 residues: Glutamyl-tRNA(Gln) amidotransferase subunit A (485 aa).

Residues Lys79 and Ser154 each act as charge relay system in the active site. Ser178 functions as the Acyl-ester intermediate in the catalytic mechanism.

Belongs to the amidase family. GatA subfamily. In terms of assembly, heterotrimer of A, B and C subunits.

The catalysed reaction is L-glutamyl-tRNA(Gln) + L-glutamine + ATP + H2O = L-glutaminyl-tRNA(Gln) + L-glutamate + ADP + phosphate + H(+). In terms of biological role, allows the formation of correctly charged Gln-tRNA(Gln) through the transamidation of misacylated Glu-tRNA(Gln) in organisms which lack glutaminyl-tRNA synthetase. The reaction takes place in the presence of glutamine and ATP through an activated gamma-phospho-Glu-tRNA(Gln). The chain is Glutamyl-tRNA(Gln) amidotransferase subunit A from Geobacillus thermodenitrificans (strain NG80-2).